The sequence spans 65 residues: Light-harvesting protein B800/830/1020 beta-2 chain (65 aa).

At threonine 1–glutamate 17 the chain is on the cytoplasmic side. Residues histidine 16 and asparagine 34 each contribute to the a bacteriochlorophyll site. A helical transmembrane segment spans residues methionine 18 to tryptophan 40. At arginine 41 to threonine 65 the chain is on the periplasmic side.

Belongs to the antenna complex beta subunit family. As to quaternary structure, the core complex is formed by different alpha and beta chains, binding bacteriochlorophyll molecules, and arranged most probably in tetrameric structures disposed around the reaction center. The non-pigmented gamma chains may constitute additional components.

It localises to the cell inner membrane. Functionally, antenna complexes are light-harvesting systems, which transfer the excitation energy to the reaction centers. This Halorhodospira halochloris (Ectothiorhodospira halochloris) protein is Light-harvesting protein B800/830/1020 beta-2 chain.